The following is a 412-amino-acid chain: Argininosuccinate synthase (412 aa).

8 to 16 serves as a coordination point for ATP; it reads AYSGGLDTS. An L-citrulline-binding site is contributed by Y87. G117 serves as a coordination point for ATP. Residues T119, N123, and D124 each coordinate L-aspartate. N123 contributes to the L-citrulline binding site. Positions 127, 175, 259, and 271 each coordinate L-citrulline.

It belongs to the argininosuccinate synthase family. Type 1 subfamily. Homotetramer.

The protein resides in the cytoplasm. The enzyme catalyses L-citrulline + L-aspartate + ATP = 2-(N(omega)-L-arginino)succinate + AMP + diphosphate + H(+). It participates in amino-acid biosynthesis; L-arginine biosynthesis; L-arginine from L-ornithine and carbamoyl phosphate: step 2/3. The chain is Argininosuccinate synthase from Clavibacter michiganensis subsp. michiganensis (strain NCPPB 382).